The sequence spans 360 residues: DAZ-associated protein 1 (360 aa).

2 RRM domains span residues 10 to 97 (GKLF…RSRP) and 114 to 191 (NKIF…RAEP). Disordered regions lie at residues 73 to 116 (HTLD…SNKI) and 184 to 345 (VEVK…DFPF). Basic and acidic residues-rich tracts occupy residues 91 to 112 (QPER…ENSR) and 184 to 195 (VEVKRAEPRDSK). The segment covering 203–231 (GSNQWGSRAMQSTANGWTGQPPQTWQGYS) has biased composition (polar residues). The span at 242–253 (TIGGYGQPAGRG) shows a compositional bias: gly residues. Positions 271 to 301 (GPFPPPQGFPPGYATPPPFGYGYGPPPPPPD) are enriched in pro residues. Residues 328–345 (QSAQDLSKPPSGQQDFPF) show a composition bias toward polar residues.

In terms of assembly, component of a mRNP complex, at least composed of DAZAP1, IGF2BP3-A, STAU and VgRBP60. Binds to the 3'-UTR of Vg1 mRNA. Interacts with profilin, a protein involved in actin assembly. Interacts with VgRBP71. In terms of tissue distribution, expressed in oocytes.

It localises to the cytoplasm. In terms of biological role, RNA-binding protein, which is required during gametogenesis. May be involved in the actin-dependent anchoring of Vg1 mRNA in the vegetal cortex of the oocyte. This Xenopus laevis (African clawed frog) protein is DAZ-associated protein 1 (dazap1).